Consider the following 160-residue polypeptide: Large ribosomal subunit protein uL22c (160 aa).

It belongs to the universal ribosomal protein uL22 family. Part of the 50S ribosomal subunit.

Its subcellular location is the plastid. The protein resides in the chloroplast. This protein binds specifically to 23S rRNA. In terms of biological role, the globular domain of the protein is located near the polypeptide exit tunnel on the outside of the subunit, while an extended beta-hairpin is found that lines the wall of the exit tunnel in the center of the 70S ribosome. The protein is Large ribosomal subunit protein uL22c (rpl22) of Arabis hirsuta (Hairy rock-cress).